A 234-amino-acid polypeptide reads, in one-letter code: Small ribosomal subunit protein uS2 (234 aa).

It belongs to the universal ribosomal protein uS2 family.

This Prochlorococcus marinus subsp. pastoris (strain CCMP1986 / NIES-2087 / MED4) protein is Small ribosomal subunit protein uS2.